Here is a 169-residue protein sequence, read N- to C-terminus: Macro domain-containing protein SCO6450 (169 aa).

The region spanning 1–169 (MTGITLVQGD…AYEAFAARLG (169 aa)) is the Macro domain.

This sequence belongs to the MacroD-type family.

The polypeptide is Macro domain-containing protein SCO6450 (Streptomyces coelicolor (strain ATCC BAA-471 / A3(2) / M145)).